A 1446-amino-acid polypeptide reads, in one-letter code: MARAQALVLALTFQFCAPETETPAAGCTFEEASDPVVPCEFSQAQYDDFQWEQVRIHPGTRTPEDLPHGAYLMVNASQHAPGQRAHIIFQTLSENDTHCVQFSYFLYSRDGHSPGTLGVYVRVNGGPLGSAVWNMTGSHGRQWHQAELAVSTFWPNEYQVLFEALISPDHKGYIGLDDILLFSYPCAKAPHFSRLGDVEVNAGQNASFQCMAAGRAAEAEHFFLQRQSGVLVPAAGVRHISHRRFLATFPLASVGRSEQDLYRCVSQAPRGAGVSNFAELIVKEPPTPIAPPQLLRAGPTYLIIQLNTNSIIGDGPIVRKEIEYRMARGPWAEVHAVNLQTYKLWHLDPDTEYEISVLLTRPGDGGTGRPGPPLISRTKCAEPTRAPKGLAFAEIQARQLTLQWEPLGYNVTRCHTYAVSLCYRYTLGGSHNQTIRECVKMERGASRYTIKNLLPFRNIHVRLILTNPEGRKEGKEVTFQTDEDVPGGIAAESLTFTPLEDMIFLKWEEPQEPNGLITQYEISYQSIESSDPAVNVPGPRRTISKLRNETYHVFSNLHPGTTYLFSVRARTSKGFGQAALTEITTNISAPSFDYADMPSPLGESENTITVLLRPAQGRGAPISVYQVVVEEERPRRLRREPGAQDCFSVPLTFETALARGLVHYFGAELAASSLLEAMPFTVGDNQTYRGFWNPPLEPRKAYLIYFQAASHLKGETRLNCIRIARKAACKESKRPLEVSQRSEEMGLILGICAGGLAVLILLLGAIIVIIRKGRDRYAYSYYPKPVNMTKATVNYRQEKTHMMSAVDRSFTDQSTLQEDERLGLSFMDAPGYSPRGDQRSGGVTEASSLLGGSPRRPCGRKGSPYHTGQLHPAVRVADLLQHINQMKTAEGYGFKQEYESFFEGWDATKKKDKLKGGRQEPVSAYDRHHVKLHPMLADPDADYISANYIDGYHRSNHFIATQGPKPEMIYDFWRMVWQEQCASIVMITKLVEVGRVKCSRYWPEDSDMYGDIKITLVKTETLAEYVVRTFALERRGYSARHEVRQFHFTAWPEHGVPYHATGLLAFIRRVKASTPPDAGPIVIHCSAGTGRTGCYIVLDVMLDMAECEGVVDIYNCVKTLCSRRVNMIQTEEQYIFIHDAILEACLCGETTIPVNEFKATYREMIRIDPQSNSSQLREEFQTLNSVTPPLDVEECSIALLPRNRDKNRSMDVLPPDRCLPFLISSDGDPNNYINAALTDSYTRSAAFIVTLHPLQSTTPDFWRLVYDYGCTSIVMLNQLNQSNSAWPCLQYWPEPGRQQYGLMEVEFVSGTANEDLVSRVFRVQNSSRLQEGHLLVRHFQFLRWSAYRDTPDSRKAFLHLLAEVDKWQAESGDGRTVVHCLNGGGRSGTFCACATVLEMIRCHSLVDVFFAAKTLRNYKPNMVETMDQYHFCYDVALEYLEALELR.

Residues 1 to 18 (MARAQALVLALTFQFCAP) form the signal peptide. Residues 19 to 749 (ETETPAAGCT…QRSEEMGLIL (731 aa)) lie on the Extracellular side of the membrane. An MAM domain is found at 25–188 (AGCTFEEASD…ILLFSYPCAK (164 aa)). Asn-75 carries N-linked (GlcNAc...) asparagine glycosylation. In terms of domain architecture, Ig-like C2-type spans 190 to 275 (PHFSRLGDVE…SQAPRGAGVS (86 aa)). Cys-210 and Cys-264 are joined by a disulfide. Fibronectin type-III domains are found at residues 288 to 383 (PIAP…CAEP), 386 to 484 (APKG…TDED), 485 to 591 (VPGG…SAPS), and 592 to 668 (FDYA…FGAE). Asn-410 carries N-linked (GlcNAc...) asparagine glycosylation. The N-linked (GlcNAc...) asparagine glycan is linked to Asn-685. Residues 750–770 (GICAGGLAVLILLLGAIIVII) form a helical membrane-spanning segment. The tract at residues 771–887 (RKGRDRYAYS…DLLQHINQMK (117 aa)) is mediates interaction with CTNNB1. Topologically, residues 771–1446 (RKGRDRYAYS…LEYLEALELR (676 aa)) are cytoplasmic. The disordered stretch occupies residues 830–867 (PGYSPRGDQRSGGVTEASSLLGGSPRRPCGRKGSPYHT). A phosphoserine mark is found at Ser-848, Ser-853, and Ser-863. At Tyr-865 the chain carries Phosphotyrosine. Tyrosine-protein phosphatase domains follow at residues 888-1144 (TAEG…ILEA) and 1176-1439 (LREE…ALEY). Substrate-binding positions include Glu-1053, 1085–1091 (CSAGTGR), and Gln-1129. The Phosphocysteine intermediate role is filled by Cys-1085. Cys-1380 functions as the Phosphocysteine intermediate in the catalytic mechanism.

Belongs to the protein-tyrosine phosphatase family. Receptor class 2B subfamily. In terms of assembly, forms homooligomeric complexes which mediate cell homotypic adhesion. Interacts (via the cytoplasmic juxtamembrane domain) with CTNNB1; may mediate interaction with the cadherin/catenin adhesion complex. Interacts with KIT. May interact with AP3B1. The extracellular domain is proteolytically processed through cleavage within the fibronectin type-III 4 domain. In addition to the 190 kDa full-length protein, proteolytic products of 100 kDa, 80 kDa and 73 kDa are observed. In terms of processing, N-glycosylated. Post-translationally, phosphorylated on tyrosine residues upon activation of KIT with stem cell factor (SCF). The 73 kDa proteolytic product is not phosphorylated. Transcripts of different sizes are differentially expressed in a subset of tissues. Detected in brain, lung, skeletal muscle, heart, kidney and placenta. In brain; expressed in olfactory bulb, cerebral cortex, hippocampus and cerebellum.

The protein resides in the cell junction. Its subcellular location is the cell membrane. The catalysed reaction is O-phospho-L-tyrosyl-[protein] + H2O = L-tyrosyl-[protein] + phosphate. In terms of biological role, tyrosine-protein phosphatase which dephosphorylates CTNNB1. Regulates CTNNB1 function both in cell adhesion and signaling. May function in cell proliferation and migration and play a role in the maintenance of epithelial integrity. May play a role in megakaryocytopoiesis. The polypeptide is Receptor-type tyrosine-protein phosphatase U (Ptpru) (Mus musculus (Mouse)).